The primary structure comprises 400 residues: MKNKIKNKIKNPFLQFFKNESSSGIVLMFCAIIAIIIANSNFSSMYNNIIHTYITIGYKDFSLSMSILHWINDGLMAIFFLVVGMEIKREIVFGELKSFKKTILPVSAAIGGMVVPAIIYALFNFNQPTIIGWGIPMATDIAFALGILSLVGKKAPKGIIIFLTALAIVDDLGAIIVIAIFYTSEISWIALILGLIIFLAIILANKLNVKNKWLYIIFGIALWICFLKSGVHETIAGVLLGMGLPIGKNMEEFRTSILYRFEHVLTPLSSFIIMPIFALANSGITIDINSLSAAIMNPVSLGIIFGLFIGKQIGIFGASYILVKLKIAKLPSKVTKRHLYGASVLGGIGFTMSLFVSSLSFTEESALSMAKISIIIASILSAAFGAAIFKIIKFKNEERV.

Helical transmembrane passes span 25–45 (IVLM…FSSM), 67–87 (ILHW…GMEI), 103–123 (ILPV…YALF), 130–150 (IIGW…ILSL), 159–179 (IIIF…IVIA), 184–204 (SEIS…IILA), 213–233 (WLYI…GVHE), 264–284 (VLTP…NSGI), 303–323 (IIFG…YILV), 339–359 (LYGA…VSSL), and 372–392 (ISII…FKII).

It belongs to the NhaA Na(+)/H(+) (TC 2.A.33) antiporter family.

Its subcellular location is the cell membrane. The catalysed reaction is Na(+)(in) + 2 H(+)(out) = Na(+)(out) + 2 H(+)(in). In terms of biological role, na(+)/H(+) antiporter that extrudes sodium in exchange for external protons. The chain is Na(+)/H(+) antiporter NhaA 1 from Clostridium beijerinckii (strain ATCC 51743 / NCIMB 8052) (Clostridium acetobutylicum).